The primary structure comprises 234 residues: Triosephosphate isomerase (234 aa).

8-10 (NFK) is a substrate binding site. Catalysis depends on His90, which acts as the Electrophile. Glu159 (proton acceptor) is an active-site residue. Substrate is bound by residues Gly165 and Ser197.

It belongs to the triosephosphate isomerase family. Homodimer.

It localises to the cytoplasm. The catalysed reaction is D-glyceraldehyde 3-phosphate = dihydroxyacetone phosphate. The protein operates within carbohydrate biosynthesis; gluconeogenesis. It participates in carbohydrate degradation; glycolysis; D-glyceraldehyde 3-phosphate from glycerone phosphate: step 1/1. Involved in the gluconeogenesis. Catalyzes stereospecifically the conversion of dihydroxyacetone phosphate (DHAP) to D-glyceraldehyde-3-phosphate (G3P). In Helicobacter acinonychis (strain Sheeba), this protein is Triosephosphate isomerase.